We begin with the raw amino-acid sequence, 152 residues long: uncharacterized protein (152 aa).

Residues 3-143 form the HTH marR-type domain; that stretch reads EQKLCQAINL…IIEIFTILKS (141 aa). Residues 55 to 78 constitute a DNA-binding region (H-T-H motif); the sequence is PGSLAMYQNVHKSAISNRLKKLLE.

This is an uncharacterized protein from Bacillus subtilis (strain 168).